Reading from the N-terminus, the 476-residue chain is MSPQTETKASVGFKAGVKEYKLTYYTPEYETKDTDILAAFRVTPQLGVPPEEAGAAVAAESSTGTWTTVWTDGLTSLDRYKGRCYHIEPVAGETDQYIVYVAYPLDLFEEGSVTNMFTSIVGNVFGFKALRALRLEDLRIPPAYIKTFQGPPHGIQVERDKLNKYGRPLLGCTIKPKLGLSAKNYGRAVYECLRGGLDFTKDDENVNSQPFMRWRDRFLFCAEALYKAQSETGEIKGHYLNATAGTCEEMMKRAVFARELGVPIVMHDYLTGGFTANTSLAHYCRDNGLLLHIHRAMHAVIDRQKNHGIHFRVLAKALRMSGGDHIHSGTVVGKLEGERDITLGFVDLLRDDFIEKDRSRGIYFSQDWVSLPGVLPVASGGIHVWHMPALTEIFGDDSVLQFGGGTLGHPWGNAPGAVANRVALEACVQARNEGRDLASQGNEIIREASKWSPELAAACEVWKEIKFDSFKAMDTL.

Residues 1 to 2 (MS) constitute a propeptide that is removed on maturation. An N-acetylproline modification is found at Pro3. N6,N6,N6-trimethyllysine is present on Lys14. Substrate is bound by residues Asn123 and Thr173. Lys175 serves as the catalytic Proton acceptor. Substrate is bound at residue Lys177. 3 residues coordinate Mg(2+): Lys201, Asp203, and Glu204. Residue Lys201 is modified to N6-carboxylysine. The active-site Proton acceptor is the His294. Substrate contacts are provided by Arg295, His327, and Ser379.

It belongs to the RuBisCO large chain family. Type I subfamily. Heterohexadecamer of 8 large chains and 8 small chains; disulfide-linked. The disulfide link is formed within the large subunit homodimers. Requires Mg(2+) as cofactor. The disulfide bond which can form in the large chain dimeric partners within the hexadecamer appears to be associated with oxidative stress and protein turnover.

Its subcellular location is the plastid. It localises to the chloroplast. The catalysed reaction is 2 (2R)-3-phosphoglycerate + 2 H(+) = D-ribulose 1,5-bisphosphate + CO2 + H2O. It carries out the reaction D-ribulose 1,5-bisphosphate + O2 = 2-phosphoglycolate + (2R)-3-phosphoglycerate + 2 H(+). Functionally, ruBisCO catalyzes two reactions: the carboxylation of D-ribulose 1,5-bisphosphate, the primary event in carbon dioxide fixation, as well as the oxidative fragmentation of the pentose substrate in the photorespiration process. Both reactions occur simultaneously and in competition at the same active site. This chain is Ribulose bisphosphate carboxylase large chain, found in Liriodendron tulipifera (Tuliptree).